Here is a 179-residue protein sequence, read N- to C-terminus: Transcription factor NF-E4 (179 aa).

Lys-43 carries the post-translational modification N6-acetyllysine. The tract at residues 100–179 (AMKATGPHNA…QLPSLHLSQG (80 aa)) is disordered. Composition is skewed to polar residues over residues 143–153 (LSQSNPPTRIS) and 163–179 (ALEQTPQQLPSLHLSQG).

Component of the SSP (stage selector protein) complex, which appears to be a heteromer of TFCP2 and 2 copies of NFE4. Interacts with HDAC1 and PCAF. Isoform 2 interacts with TFCP2. In terms of processing, acetylation at Lys-43 prolongs the protein half-life by preventing ubiquitin-mediated degradation and reduces the interaction between NF-E4 and HDAC1, potentially maximizing the activating ability of the factor at the gamma-promoter. Ubiquitinated; leading to its degradation by the proteasome. Acetylation at Lys-43 prevents ubiquitination. Specifically expressed in fetal liver, cord blood and bone marrow. Also expressed in the K562 and HEL cell lines, which constitutively express the fetal globin genes.

The protein localises to the nucleus. Functions as part of the SSP (stage selector protein) complex, a complex that contributes to the preferential expression of the gamma-gene in fetal erythroid cells by facilitating the interaction of the gamma-globin genes with enhancer elements contained in the locus control region (LCR). The complex binds to the stage selector element (SSE) in the proximal gamma-globin promoter. In contrast, isoform 2 acts as a repressor of gamma-globin gene expression by preventing NFE2 and RNA polymerase II recruitment to the promoter. The protein is Transcription factor NF-E4 (NFE4) of Homo sapiens (Human).